A 453-amino-acid polypeptide reads, in one-letter code: Chromosomal replication initiator protein DnaA (453 aa).

The segment at 1–73 (MELSPQDLWT…ADVVEEILGY (73 aa)) is domain I, interacts with DnaA modulators. The domain II stretch occupies residues 73–110 (YSIDIQLTSTQGENIAIVGETQVSAYYPTLSGEHPKPI). A domain III, AAA+ region region spans residues 111–327 (KLNPKYTFSR…GALIRAITYI (217 aa)). Residues Gly155, Gly157, Lys158, and Thr159 each contribute to the ATP site. Residues 328 to 453 (SISGLSMTVE…HLASRTQKTT (126 aa)) are domain IV, binds dsDNA.

Belongs to the DnaA family. In terms of assembly, oligomerizes as a right-handed, spiral filament on DNA at oriC.

It is found in the cytoplasm. Functionally, plays an essential role in the initiation and regulation of chromosomal replication. ATP-DnaA binds to the origin of replication (oriC) to initiate formation of the DNA replication initiation complex once per cell cycle. Binds the DnaA box (a 9 base pair repeat at the origin) and separates the double-stranded (ds)DNA. Forms a right-handed helical filament on oriC DNA; dsDNA binds to the exterior of the filament while single-stranded (ss)DNA is stabiized in the filament's interior. The ATP-DnaA-oriC complex binds and stabilizes one strand of the AT-rich DNA unwinding element (DUE), permitting loading of DNA polymerase. After initiation quickly degrades to an ADP-DnaA complex that is not apt for DNA replication. Binds acidic phospholipids. The chain is Chromosomal replication initiator protein DnaA from Gloeothece citriformis (strain PCC 7424) (Cyanothece sp. (strain PCC 7424)).